Consider the following 293-residue polypeptide: Meteorin (293 aa).

Residues 1-23 (MGFPAAALLCALCCGLLAPAARA) form the signal peptide. Cystine bridges form between C30-C51, C82-C118, C171-C242, C174-C266, and C184-C288.

This sequence belongs to the meteorin family. Monomer.

It is found in the secreted. Involved in both glial cell differentiation and axonal network formation during neurogenesis. Promotes astrocyte differentiation and transforms cerebellar astrocytes into radial glia. Also induces axonal extension in small and intermediate neurons of sensory ganglia by activating nearby satellite glia. This chain is Meteorin (METRN), found in Homo sapiens (Human).